The chain runs to 269 residues: Capsid assembly scaffolding protein (269 aa).

This sequence belongs to the T4likevirus capsid assembly scaffolding protein family.

The protein resides in the virion. Functionally, scaffolding protein involved in the icosahedric procapsid assembly. Coassembles with the capsid proteins to form the procapsid, in which the scaffolding protein is found within the external shell of icosahedrally arranged capsid protein subunits. In a subsequent step the scaffolding protein molecules are cleaved by the viral protease and released, except for the internal peptide VII. In terms of biological role, cleavage product of Gp22 that is incorporated into the mature phage head. This Enterobacteria phage T4 (Bacteriophage T4) protein is Capsid assembly scaffolding protein (22).